The sequence spans 504 residues: Deoxyguanosinetriphosphate triphosphohydrolase (504 aa).

Residues 66-273 (RLTHSMEVQQ…MEAADDISYC (208 aa)) form the HD domain.

This sequence belongs to the dGTPase family. Type 1 subfamily. As to quaternary structure, homotetramer. Requires Mg(2+) as cofactor.

It catalyses the reaction dGTP + H2O = 2'-deoxyguanosine + triphosphate + H(+). DGTPase preferentially hydrolyzes dGTP over the other canonical NTPs. In Enterobacter sp. (strain 638), this protein is Deoxyguanosinetriphosphate triphosphohydrolase.